We begin with the raw amino-acid sequence, 411 residues long: Serine hydroxymethyltransferase (411 aa).

(6S)-5,6,7,8-tetrahydrofolate contacts are provided by residues leucine 119 and 123-125 (GHL). Lysine 228 is modified (N6-(pyridoxal phosphate)lysine).

Belongs to the SHMT family. In terms of assembly, homodimer. Pyridoxal 5'-phosphate is required as a cofactor.

It localises to the cytoplasm. The enzyme catalyses (6R)-5,10-methylene-5,6,7,8-tetrahydrofolate + glycine + H2O = (6S)-5,6,7,8-tetrahydrofolate + L-serine. It participates in one-carbon metabolism; tetrahydrofolate interconversion. It functions in the pathway amino-acid biosynthesis; glycine biosynthesis; glycine from L-serine: step 1/1. In terms of biological role, catalyzes the reversible interconversion of serine and glycine with tetrahydrofolate (THF) serving as the one-carbon carrier. This reaction serves as the major source of one-carbon groups required for the biosynthesis of purines, thymidylate, methionine, and other important biomolecules. Also exhibits THF-independent aldolase activity toward beta-hydroxyamino acids, producing glycine and aldehydes, via a retro-aldol mechanism. This is Serine hydroxymethyltransferase from Clostridium kluyveri (strain NBRC 12016).